The primary structure comprises 506 residues: MDLLLLEKTLIGLFLAAVVAIAVSTLRGRKFKLPPGPLPVPIFGNWLQVGDDLNHRNLTDLAKKFGDIFLLRMGQRNLVVVSSPELAKEVLHTQGVEFGSRTRNVVFDIFTGKGQDMVFTVYGEHWRKMRRIMTVPFFTNKVVQQYRHGWESEAAAVVEDVKKNPDAAVSGTVIRRRLQLMMYNNMYRIMFDRRFESEEDPIFQRLRALNGERSRLAQSFEYNYGDFIPILRPFLKGYLKICKEVKETRLKLFKDYFVDERKKLGSTKSTNNNNELKCAIDHILDAQRKGEINEDNVLYIVENINVAAIETTLWSIEWGIAELVNHPEIQQKLRDEIDRVLGAGHQVTEPDIQKLPYLQAVVKETLRLRMAIPLLVPHMNLHDAKLGGYDIPAESKILVNAWWLANNPAHWKKPEEFRPERFFEEESLVEANGNDFRYLPFGVGRRSCPGIILALPILGITLGRLVQNFELLPPPGQSQIDTSEKGGQFSLHILKHSTIVAKPRSF.

Residues 3–23 (LLLLEKTLIGLFLAAVVAIAV) form a helical membrane-spanning segment. Residues 213–218 (RSRLAQ) and alanine 307 contribute to the (E)-cinnamate site. Cysteine 448 provides a ligand contact to heme.

Belongs to the cytochrome P450 family. Requires heme as cofactor.

It is found in the membrane. The enzyme catalyses (E)-cinnamate + reduced [NADPH--hemoprotein reductase] + O2 = (E)-4-coumarate + oxidized [NADPH--hemoprotein reductase] + H2O + H(+). The protein operates within phenylpropanoid metabolism; trans-4-coumarate biosynthesis; trans-4-coumarate from trans-cinnamate: step 1/1. In terms of biological role, catalyzes the first oxidative step of the phenylpropanoid pathway in higher plants by transforming trans-cinnamate into p-coumarate. The compounds formed by this pathway are essential components for lignification, pollination, and defense against ultraviolet light, predators and pathogens. The protein is Trans-cinnamate 4-monooxygenase (CYP73A11) of Glycine max (Soybean).